The sequence spans 296 residues: Ribosomal RNA small subunit methyltransferase A (296 aa).

6 residues coordinate S-adenosyl-L-methionine: Asn-31, Leu-33, Gly-58, Glu-79, Asp-111, and Asn-136.

The protein belongs to the class I-like SAM-binding methyltransferase superfamily. rRNA adenine N(6)-methyltransferase family. RsmA subfamily.

Its subcellular location is the cytoplasm. The enzyme catalyses adenosine(1518)/adenosine(1519) in 16S rRNA + 4 S-adenosyl-L-methionine = N(6)-dimethyladenosine(1518)/N(6)-dimethyladenosine(1519) in 16S rRNA + 4 S-adenosyl-L-homocysteine + 4 H(+). In terms of biological role, specifically dimethylates two adjacent adenosines (A1518 and A1519) in the loop of a conserved hairpin near the 3'-end of 16S rRNA in the 30S particle. May play a critical role in biogenesis of 30S subunits. The polypeptide is Ribosomal RNA small subunit methyltransferase A (Lactobacillus johnsonii (strain CNCM I-12250 / La1 / NCC 533)).